We begin with the raw amino-acid sequence, 247 residues long: tRNA pseudouridine synthase A (247 aa).

Residue Asp52 is the Nucleophile of the active site. A substrate-binding site is contributed by Tyr110.

The protein belongs to the tRNA pseudouridine synthase TruA family. In terms of assembly, homodimer.

It carries out the reaction uridine(38/39/40) in tRNA = pseudouridine(38/39/40) in tRNA. In terms of biological role, formation of pseudouridine at positions 38, 39 and 40 in the anticodon stem and loop of transfer RNAs. The sequence is that of tRNA pseudouridine synthase A from Geobacter sp. (strain M21).